Consider the following 296-residue polypeptide: Cation-efflux pump FieF (296 aa).

Residues 1–18 lie on the Cytoplasmic side of the membrane; sequence MTQTSQYDFWVKLASRAS. Residues 19-32 traverse the membrane as a helical segment; it reads VATALTLITIKLLA. Residues 33-43 lie on the Periplasmic side of the membrane; it reads WLYSGSASMLA. A helical transmembrane segment spans residues 44 to 60; it reads SLTDSFADTLASIINFI. The Zn(2+) site is built by Asp47, Asp51, Asp70, His73, and His77. Topologically, residues 61–83 are cytoplasmic; the sequence is AIRYAIVPADHDHRYGHGKAEPL. A helical membrane pass occupies residues 84 to 105; the sequence is AALAQSAFIMGSAFLLLFYGGE. Residues 106–119 lie on the Periplasmic side of the membrane; that stretch reads RLLNPSPVENATLG. A helical membrane pass occupies residues 120–138; that stretch reads VVVSVVAIVLTLALVLLQK. At 139-145 the chain is on the cytoplasmic side; that stretch reads RALAATN. Residues 146–160 traverse the membrane as a helical segment; sequence STVVEADSLHYKSDL. His155 and Asp159 together coordinate Zn(2+). At 161–180 the chain is on the periplasmic side; that stretch reads FLNAAVLLALVLSQYGWWWA. A helical transmembrane segment spans residues 181-200; that stretch reads DGLFAVLIACYIGQQAFDLG. The Cytoplasmic portion of the chain corresponds to 201 to 296; sequence YRSIQALLDR…DPVQVEPTTQ (96 aa). Zn(2+) contacts are provided by His234, Asp235, His250, His263, His285, and Asp287.

It belongs to the cation diffusion facilitator (CDF) transporter (TC 2.A.4) family. FieF subfamily. Homodimer. The subunits are held together in a parallel orientation through zinc binding at the interface of the cytoplasmic domains.

Its subcellular location is the cell inner membrane. It carries out the reaction Zn(2+)(in) + H(+)(out) = Zn(2+)(out) + H(+)(in). The enzyme catalyses Cd(2+)(in) + H(+)(out) = Cd(2+)(out) + H(+)(in). It catalyses the reaction Fe(2+)(in) + H(+)(out) = Fe(2+)(out) + H(+)(in). With respect to regulation, cytoplasmic zinc binding may trigger movements of two electrically repulsive cytoplasmic domains and reorient transmembrane helices, thereby modulating coordination geometry of the active site for zinc transport. It may modulate activity in response to cytoplasmic metal fluctuations. Divalent metal cation transporter which exports Zn(2+), Cd(2+) and possibly Fe(2+). Zn(2+)/H(+) antiporter capable of using the proton motive force to remove Zn(2+) from the cytoplasm. May be involved in zinc and iron detoxification by efflux. The chain is Cation-efflux pump FieF from Shewanella oneidensis (strain ATCC 700550 / JCM 31522 / CIP 106686 / LMG 19005 / NCIMB 14063 / MR-1).